The primary structure comprises 189 residues: Ribulose bisphosphate carboxylase small subunit, chloroplastic (189 aa).

The transit peptide at 1-66 (MASSIMALSS…KTTSNGSRVR (66 aa)) directs the protein to the chloroplast.

Belongs to the RuBisCO small chain family. As to quaternary structure, heterohexadecamer of 8 large and 8 small subunits.

It is found in the plastid. The protein localises to the chloroplast. Its function is as follows. RuBisCO catalyzes two reactions: the carboxylation of D-ribulose 1,5-bisphosphate, the primary event in carbon dioxide fixation, as well as the oxidative fragmentation of the pentose substrate. Both reactions occur simultaneously and in competition at the same active site. Although the small subunit is not catalytic it is essential for maximal activity. This chain is Ribulose bisphosphate carboxylase small subunit, chloroplastic, found in Larix laricina (Tamarack).